The chain runs to 1210 residues: Homeodomain-interacting protein kinase 1 (1210 aa).

Residue lysine 25 forms a Glycyl lysine isopeptide (Lys-Gly) (interchain with G-Cter in SUMO); alternate linkage. Lysine 25 participates in a covalent cross-link: Glycyl lysine isopeptide (Lys-Gly) (interchain with G-Cter in SUMO2); alternate. Residues lysine 120 and lysine 124 each participate in a glycyl lysine isopeptide (Lys-Gly) (interchain with G-Cter in SUMO2) cross-link. The Protein kinase domain maps to 190–518; sequence YEVLEFLGRG…PLKTLNHQFV (329 aa). ATP contacts are provided by residues 196-204 and lysine 219; that span reads LGRGTFGQV. Aspartate 315 (proton acceptor) is an active-site residue. The tract at residues 835–856 is disordered; the sequence is QQQSSSLPSKKNKQSAPVSSKS. The Nuclear localization signal 1 (NLS1) motif lies at 844–847; sequence KKNK. Serine 872 carries the phosphoserine modification. Positions 885–1093 are interaction with TP53; that stretch reads PVQDQHQPII…FQHGSPLHST (209 aa). Residues 891 to 998 are required for localization to nuclear speckles; it reads QPIIIPDTPS…PLKTQLGDCT (108 aa). The segment at 902–926 is SUMO interaction motifs (SIM); required for nuclear localization and kinase activity; the sequence is PVSVITIRSDTDEEEDNKYKPNSSS. The segment at 938–981 is disordered; sequence TVNDSPDSDSSLSSPHPTDTLSALRGNSGTLLEGPGRPAADGIG. The span at 941-959 shows a compositional bias: low complexity; it reads DSPDSDSSLSSPHPTDTLS. Residue lysine 991 forms a Glycyl lysine isopeptide (Lys-Gly) (interchain with G-Cter in SUMO2) linkage. Disordered stretches follow at residues 1046 to 1069 and 1084 to 1104; these read LSQN…APRR and FQHG…APAH. Composition is skewed to low complexity over residues 1047–1063 and 1095–1104; these read SQNQ…ERSS and HPHLAPAPAH. The residue at position 1200 (serine 1200) is a Phosphoserine. Residue lysine 1203 forms a Glycyl lysine isopeptide (Lys-Gly) (interchain with G-Cter in SUMO) linkage.

It belongs to the protein kinase superfamily. CMGC Ser/Thr protein kinase family. HIPK subfamily. In terms of assembly, interacts with Nkx1-2, Nkx2-5, MYB, PARK7, DAXX and p53/TP53. Part of a cytoplasmic complex made of HIPK1, DAB2IP and MAP3K5 in response to TNF. This complex formation promotes MAP3K5-JNK activation and subsequent apoptosis. Post-translationally, phosphorylated and activated by JNK1. Autophosphorylated. Sumoylated. When conjugated it is directed to nuclear speckles. SENP1-mediated desumoylation is mediated by TNF in response to stress stimuli, triggering transient translocation from nucleus to cytoplasm. In terms of tissue distribution, ubiquitously expressed, with high levels in reproductive tissues. Expressed in the epithelial layer of mammary gland, uterus and epididymis, in the corpus luteum, and in post-meiotic round spermatids.

It is found in the nucleus. It localises to the cytoplasm. Its subcellular location is the nucleus speckle. The enzyme catalyses L-seryl-[protein] + ATP = O-phospho-L-seryl-[protein] + ADP + H(+). It carries out the reaction L-threonyl-[protein] + ATP = O-phospho-L-threonyl-[protein] + ADP + H(+). In terms of biological role, serine/threonine-protein kinase involved in transcription regulation and TNF-mediated cellular apoptosis. Plays a role as a corepressor for homeodomain transcription factors. Phosphorylates DAXX and MYB. Phosphorylates DAXX in response to stress, and mediates its translocation from the nucleus to the cytoplasm. Inactivates MYB transcription factor activity by phosphorylation. Prevents MAP3K5-JNK activation in the absence of TNF. TNF triggers its translocation to the cytoplasm in response to stress stimuli, thus activating nuclear MAP3K5-JNK by derepression and promoting apoptosis. May be involved in anti-oxidative stress responses. Involved in the regulation of eye size, lens formation and retinal lamination during late embryogenesis. Promotes angiogenesis and to be involved in erythroid differentiation. May be involved in malignant squamous cell tumor formation. Phosphorylates PAGE4 at 'Thr-51' which is critical for the ability of PAGE4 to potentiate the transcriptional activator activity of JUN. The chain is Homeodomain-interacting protein kinase 1 (Hipk1) from Mus musculus (Mouse).